The chain runs to 630 residues: Long-chain-fatty-acid--AMP ligase FadD32 (630 aa).

ATP-binding positions include 187-192 (TSGSTR), S342, A346, D469, and R483.

It belongs to the ATP-dependent AMP-binding enzyme family. Monomer.

The catalysed reaction is a long-chain fatty acid + holo-[ACP] + ATP = a long-chain fatty acyl-[ACP] + AMP + diphosphate. It catalyses the reaction decanoate + ATP + H(+) = decanoyl-AMP + diphosphate. It carries out the reaction dodecanoate + ATP + H(+) = dodecanoyl-AMP + diphosphate. The enzyme catalyses tetradecanoate + ATP + H(+) = tetradecanoyl-AMP + diphosphate. It functions in the pathway lipid metabolism; mycolic acid biosynthesis. With respect to regulation, the acyl-AMP ligase activity is inhibited by the alkylphosphate ester of AMP, adenosine 50-dodecylphosphate (AMPC12). Also inhibited by eicosyl-AMP (AMPC20). Its function is as follows. Involved in the biosynthesis of mycolic acids. Catalyzes the activation of long-chain fatty acids as acyl-adenylates (acyl-AMP), which are then transferred to the phosphopantetheine arm of the polyketide synthase Pks13 for further chain extension. Can use decanoate (C10), dodecanoate (C12) and tetradecanoate (C14). The protein is Long-chain-fatty-acid--AMP ligase FadD32 of Mycolicibacterium smegmatis (strain ATCC 700084 / mc(2)155) (Mycobacterium smegmatis).